We begin with the raw amino-acid sequence, 754 residues long: 1,4-alpha-glucan branching enzyme GlgB (754 aa).

The active-site Nucleophile is the Asp-431. The active-site Proton donor is Glu-484.

Belongs to the glycosyl hydrolase 13 family. GlgB subfamily. Monomer.

It catalyses the reaction Transfers a segment of a (1-&gt;4)-alpha-D-glucan chain to a primary hydroxy group in a similar glucan chain.. It functions in the pathway glycan biosynthesis; glycogen biosynthesis. Catalyzes the formation of the alpha-1,6-glucosidic linkages in glycogen by scission of a 1,4-alpha-linked oligosaccharide from growing alpha-1,4-glucan chains and the subsequent attachment of the oligosaccharide to the alpha-1,6 position. The protein is 1,4-alpha-glucan branching enzyme GlgB of Prochlorococcus marinus (strain MIT 9215).